The sequence spans 79 residues: Acyl carrier protein (79 aa).

The Carrier domain maps to 2–77 (SDIEQRVKKI…QAIDYAKAHV (76 aa)). Ser37 carries the post-translational modification O-(pantetheine 4'-phosphoryl)serine.

The protein belongs to the acyl carrier protein (ACP) family. 4'-phosphopantetheine is transferred from CoA to a specific serine of apo-ACP by AcpS. This modification is essential for activity because fatty acids are bound in thioester linkage to the sulfhydryl of the prosthetic group.

The protein localises to the cytoplasm. The protein operates within lipid metabolism; fatty acid biosynthesis. Its function is as follows. Carrier of the growing fatty acid chain in fatty acid biosynthesis. This is Acyl carrier protein from Janthinobacterium sp. (strain Marseille) (Minibacterium massiliensis).